Here is a 20-residue protein sequence, read N- to C-terminus: Thrombin-like enzyme okinaxobin-2 (20 aa).

The Peptidase S1 domain occupies 1-20 (VVGGDECNINEHRFLVALYY).

Belongs to the peptidase S1 family. Snake venom subfamily. As to quaternary structure, monomer. Glycosylated. As to expression, expressed by the venom gland.

Its subcellular location is the secreted. Its activity is regulated as follows. Strongly inactivated by diisopropylfluorophosphate (DFP) and to a lesser extent by tosyl-L-lysine chloromethyl ketone (TLCK). Functionally, thrombin-like snake venom serine protease. Releases both fibrinopeptides A and B from fibrinogen (FGA and FGB) to form fibrin clots. The polypeptide is Thrombin-like enzyme okinaxobin-2 (Ovophis okinavensis (Ryukyu Island pit viper)).